The chain runs to 155 residues: Snaclec clone 2100755 (155 aa).

A signal peptide spans 1–23 (MGRFIFVSFGLLVVFLSLSGTAA). Disulfide bonds link cysteine 25–cysteine 36, cysteine 53–cysteine 144, and cysteine 119–cysteine 136. The C-type lectin domain maps to 32-145 (YDGHCYQVFS…CEKSVSFVCK (114 aa)).

It belongs to the snaclec family. Heterodimer; disulfide-linked.

Its subcellular location is the secreted. Interferes with one step of hemostasis (modulation of platelet aggregation, or coagulation cascade, for example). The sequence is that of Snaclec clone 2100755 from Deinagkistrodon acutus (Hundred-pace snake).